Reading from the N-terminus, the 351-residue chain is Peptide chain release factor 1 (351 aa).

An N5-methylglutamine modification is found at Q229.

It belongs to the prokaryotic/mitochondrial release factor family. In terms of processing, methylated by PrmC. Methylation increases the termination efficiency of RF1.

It is found in the cytoplasm. Functionally, peptide chain release factor 1 directs the termination of translation in response to the peptide chain termination codons UAG and UAA. The polypeptide is Peptide chain release factor 1 (Cereibacter sphaeroides (strain ATCC 17029 / ATH 2.4.9) (Rhodobacter sphaeroides)).